The sequence spans 398 residues: S-adenosylmethionine synthase (398 aa).

ATP is bound at residue histidine 19. Position 21 (aspartate 21) interacts with Mg(2+). Glutamate 47 is a binding site for K(+). Positions 60 and 103 each coordinate L-methionine. Positions 103–113 are flexible loop; it reads QSPDIAQGVDV. Residues 177-179, 243-244, aspartate 252, 258-259, alanine 275, and lysine 279 each bind ATP; these read DGK, RF, and RK. Aspartate 252 is an L-methionine binding site. L-methionine is bound at residue lysine 283.

Belongs to the AdoMet synthase family. In terms of assembly, homotetramer; dimer of dimers. Requires Mg(2+) as cofactor. K(+) serves as cofactor.

The protein localises to the cytoplasm. It carries out the reaction L-methionine + ATP + H2O = S-adenosyl-L-methionine + phosphate + diphosphate. The protein operates within amino-acid biosynthesis; S-adenosyl-L-methionine biosynthesis; S-adenosyl-L-methionine from L-methionine: step 1/1. In terms of biological role, catalyzes the formation of S-adenosylmethionine (AdoMet) from methionine and ATP. The overall synthetic reaction is composed of two sequential steps, AdoMet formation and the subsequent tripolyphosphate hydrolysis which occurs prior to release of AdoMet from the enzyme. The sequence is that of S-adenosylmethionine synthase from Symbiobacterium thermophilum (strain DSM 24528 / JCM 14929 / IAM 14863 / T).